The following is a 447-amino-acid chain: Pyruvate kinase (447 aa).

Arg33 is a substrate binding site. Residues Asn35, Ser37, and Asp61 each contribute to the K(+) site. 35 to 38 (NMSH) is a binding site for ATP. An ATP-binding site is contributed by Arg68. Residue Glu203 coordinates Mg(2+). Gly226, Asp227, and Thr259 together coordinate substrate. A Mg(2+)-binding site is contributed by Asp227.

It belongs to the pyruvate kinase family. Homotetramer. Mg(2+) serves as cofactor. The cofactor is K(+).

The catalysed reaction is pyruvate + ATP = phosphoenolpyruvate + ADP + H(+). It functions in the pathway carbohydrate degradation; glycolysis; pyruvate from D-glyceraldehyde 3-phosphate: step 5/5. This chain is Pyruvate kinase, found in Methanocaldococcus jannaschii (strain ATCC 43067 / DSM 2661 / JAL-1 / JCM 10045 / NBRC 100440) (Methanococcus jannaschii).